We begin with the raw amino-acid sequence, 245 residues long: 4-hydroxy-tetrahydrodipicolinate reductase (245 aa).

Residues 7-12 (GAKGKV), 75-77 (GTT), and 102-105 (APNF) contribute to the NAD(+) site. The active-site Proton donor/acceptor is the histidine 132. Histidine 133 lines the (S)-2,3,4,5-tetrahydrodipicolinate pocket. Lysine 136 functions as the Proton donor in the catalytic mechanism. Position 142-143 (142-143 (GT)) interacts with (S)-2,3,4,5-tetrahydrodipicolinate.

It belongs to the DapB family.

It is found in the cytoplasm. The catalysed reaction is (S)-2,3,4,5-tetrahydrodipicolinate + NAD(+) + H2O = (2S,4S)-4-hydroxy-2,3,4,5-tetrahydrodipicolinate + NADH + H(+). It carries out the reaction (S)-2,3,4,5-tetrahydrodipicolinate + NADP(+) + H2O = (2S,4S)-4-hydroxy-2,3,4,5-tetrahydrodipicolinate + NADPH + H(+). Its pathway is amino-acid biosynthesis; L-lysine biosynthesis via DAP pathway; (S)-tetrahydrodipicolinate from L-aspartate: step 4/4. Its function is as follows. Catalyzes the conversion of 4-hydroxy-tetrahydrodipicolinate (HTPA) to tetrahydrodipicolinate. This chain is 4-hydroxy-tetrahydrodipicolinate reductase, found in Mycobacterium tuberculosis (strain ATCC 25177 / H37Ra).